The sequence spans 333 residues: Phospholipid phosphatase-related protein type 1 (333 aa).

3 helical membrane-spanning segments follow: residues 12-32 (IIPC…LLAY), 66-86 (FIQP…IIFV), and 126-146 (FIGV…AGQV). N-linked (GlcNAc...) asparagine glycosylation occurs at Asn162. 3 consecutive transmembrane segments (helical) span residues 200-217 (ASLS…ITST), 223-243 (SRLA…LTGL), and 256-276 (VVAG…CVVN).

The protein belongs to the PA-phosphatase related phosphoesterase family.

It is found in the cell membrane. It localises to the cell projection. The protein resides in the neuron projection. Functionally, may play a role in neurite outgrowth and neurogenesis. The chain is Phospholipid phosphatase-related protein type 1 (plppr1) from Danio rerio (Zebrafish).